The primary structure comprises 450 residues: MSRKYFGTDGVRGKVGTFPITPDFAMKLGWAAGTVLASTGTKEVLIGKDTRISGYMLESAMEAGFSAAGVNVALIGPMPTPAVAYLASTFRADAGVVISASHNPFYDNGIKFFSNTGTKLNDAQELEIEALLEQALEHNALQCVASEKLGKVRRIDDAAGRYIEFCKGTFPNHLSLAGLKIVVDSAHGAAYHIAPNVYRELGAEVISINDKPNGVNINDHCGATHLDSLQSAVMIHEADLGIALDGDADRVMFVDHNGHVVDGDEILFILAQAAYQKGEMQGGVVGTLMSNLGLELALKQMGIPFLRAKVGDRYVVEQLKETGWQLGGEGSGHILSLQHASTGDGIVASLQVLKAILESGKRLAELKAGMTKLPQVLINVRLTSGSADSILSKDSVKQAVITAEEVLGNQGRVLLRKSGTEPLIRVMVESTDISLTQQQAEYIAQAVKVA.

Residue Ser101 is the Phosphoserine intermediate of the active site. Ser101, Asp245, Asp247, and Asp249 together coordinate Mg(2+). At Ser101 the chain carries Phosphoserine.

The protein belongs to the phosphohexose mutase family. Mg(2+) is required as a cofactor. In terms of processing, activated by phosphorylation.

It carries out the reaction alpha-D-glucosamine 1-phosphate = D-glucosamine 6-phosphate. Functionally, catalyzes the conversion of glucosamine-6-phosphate to glucosamine-1-phosphate. This is Phosphoglucosamine mutase 2 from Shewanella sp. (strain MR-7).